The chain runs to 203 residues: Probable deoxycytidylate deaminase (203 aa).

The region spanning His-27–Leu-163 is the CMP/dCMP-type deaminase domain. His-102 is a Zn(2+) binding site. The active-site Proton donor is Glu-104. Zn(2+) contacts are provided by Cys-128 and Cys-131.

The protein belongs to the cytidine and deoxycytidylate deaminase family. Zn(2+) is required as a cofactor.

The catalysed reaction is dCMP + H2O + H(+) = dUMP + NH4(+). Supplies the nucleotide substrate for thymidylate synthetase. The protein is Probable deoxycytidylate deaminase of Drosophila melanogaster (Fruit fly).